The sequence spans 204 residues: FMN-dependent NADH:quinone oxidoreductase 1 (204 aa).

Residues Ser10 and Ser15–Ser17 contribute to the FMN site.

This sequence belongs to the azoreductase type 1 family. Homodimer. The cofactor is FMN.

It catalyses the reaction 2 a quinone + NADH + H(+) = 2 a 1,4-benzosemiquinone + NAD(+). It carries out the reaction N,N-dimethyl-1,4-phenylenediamine + anthranilate + 2 NAD(+) = 2-(4-dimethylaminophenyl)diazenylbenzoate + 2 NADH + 2 H(+). Quinone reductase that provides resistance to thiol-specific stress caused by electrophilic quinones. Functionally, also exhibits azoreductase activity. Catalyzes the reductive cleavage of the azo bond in aromatic azo compounds to the corresponding amines. The chain is FMN-dependent NADH:quinone oxidoreductase 1 from Rhizobium etli (strain ATCC 51251 / DSM 11541 / JCM 21823 / NBRC 15573 / CFN 42).